The sequence spans 168 residues: CS3 fimbrial subunit A (168 aa).

The signal sequence occupies residues 1–22 (MLKIKYLLIGLSLSAMSSYSLA).

In terms of processing, a longer minor form, starting at amino acid 15, has been detected by amino acid sequencing. This is probably due to alternative processing of the signal peptide.

The protein localises to the fimbrium. Fimbriae (also called pili), polar filaments radiating from the surface of the bacterium to a length of 0.5-1.5 micrometers and numbering 100-300 per cell, enable bacteria to colonize the epithelium of specific host organs. The chain is CS3 fimbrial subunit A from Escherichia coli.